Reading from the N-terminus, the 40-residue chain is Putative protein FAM86JP (40 aa).

Positions Met1–Ser40 are disordered. The span at Ser10–Ala23 shows a compositional bias: basic residues.

The sequence is that of Putative protein FAM86JP from Homo sapiens (Human).